A 227-amino-acid polypeptide reads, in one-letter code: NAD(P)H-hydrate epimerase (227 aa).

Residues 10–227 (MRALETAAFN…GKIMVQYIGL (218 aa)) enclose the YjeF N-terminal domain. 62 to 66 (NNGGD) contacts (6S)-NADPHX. Positions 63 and 142 each coordinate K(+). (6S)-NADPHX contacts are provided by residues 146 to 152 (GIGLNRP) and Asp176. Ser179 provides a ligand contact to K(+).

Belongs to the NnrE/AIBP family. Requires K(+) as cofactor.

The catalysed reaction is (6R)-NADHX = (6S)-NADHX. The enzyme catalyses (6R)-NADPHX = (6S)-NADPHX. In terms of biological role, catalyzes the epimerization of the S- and R-forms of NAD(P)HX, a damaged form of NAD(P)H that is a result of enzymatic or heat-dependent hydration. This is a prerequisite for the S-specific NAD(P)H-hydrate dehydratase to allow the repair of both epimers of NAD(P)HX. In Roseobacter litoralis (strain ATCC 49566 / DSM 6996 / JCM 21268 / NBRC 15278 / OCh 149), this protein is NAD(P)H-hydrate epimerase.